The primary structure comprises 502 residues: Probable glycerol kinase (502 aa).

Threonine 11 lines the substrate pocket. Arginine 15 contributes to the ATP binding site. The substrate site is built by arginine 85, tyrosine 140, and aspartate 246. ATP-binding positions include threonine 268, glycine 313, and 416-420 (GMIAN).

It belongs to the FGGY kinase family.

The catalysed reaction is glycerol + ATP = sn-glycerol 3-phosphate + ADP + H(+). The protein operates within polyol metabolism; glycerol degradation via glycerol kinase pathway; sn-glycerol 3-phosphate from glycerol: step 1/1. This is Probable glycerol kinase from Caenorhabditis elegans.